The following is a 393-amino-acid chain: S-adenosylmethionine synthase (393 aa).

Histidine 16 contributes to the ATP binding site. Aspartate 18 provides a ligand contact to Mg(2+). Residue glutamate 44 participates in K(+) binding. Positions 57 and 100 each coordinate L-methionine. Positions 100–110 (QSNDIAQGVDH) are flexible loop. ATP is bound by residues 167 to 169 (DAK), 238 to 239 (RF), aspartate 247, 253 to 254 (RK), alanine 270, and lysine 274. An L-methionine-binding site is contributed by aspartate 247. L-methionine is bound at residue lysine 278.

Belongs to the AdoMet synthase family. In terms of assembly, homotetramer; dimer of dimers. Mg(2+) is required as a cofactor. Requires K(+) as cofactor.

It localises to the cytoplasm. It catalyses the reaction L-methionine + ATP + H2O = S-adenosyl-L-methionine + phosphate + diphosphate. Its pathway is amino-acid biosynthesis; S-adenosyl-L-methionine biosynthesis; S-adenosyl-L-methionine from L-methionine: step 1/1. In terms of biological role, catalyzes the formation of S-adenosylmethionine (AdoMet) from methionine and ATP. The overall synthetic reaction is composed of two sequential steps, AdoMet formation and the subsequent tripolyphosphate hydrolysis which occurs prior to release of AdoMet from the enzyme. In Variovorax paradoxus (strain S110), this protein is S-adenosylmethionine synthase.